The sequence spans 127 residues: Small ribosomal subunit protein uS13 (127 aa).

Residues 97–127 are disordered; it reads PVRGQRTRTNARTRRGGRKTVAGKKKAAAKK. A compositionally biased stretch (basic residues) spans 101 to 127; the sequence is QRTRTNARTRRGGRKTVAGKKKAAAKK.

Belongs to the universal ribosomal protein uS13 family. In terms of assembly, part of the 30S ribosomal subunit. Forms a loose heterodimer with protein S19. Forms two bridges to the 50S subunit in the 70S ribosome.

Its function is as follows. Located at the top of the head of the 30S subunit, it contacts several helices of the 16S rRNA. In the 70S ribosome it contacts the 23S rRNA (bridge B1a) and protein L5 of the 50S subunit (bridge B1b), connecting the 2 subunits; these bridges are implicated in subunit movement. Contacts the tRNAs in the A and P-sites. This chain is Small ribosomal subunit protein uS13, found in Gloeobacter violaceus (strain ATCC 29082 / PCC 7421).